A 120-amino-acid chain; its full sequence is Large ribosomal subunit protein bL12 (120 aa).

It belongs to the bacterial ribosomal protein bL12 family. Homodimer. Part of the ribosomal stalk of the 50S ribosomal subunit. Forms a multimeric L10(L12)X complex, where L10 forms an elongated spine to which 2 to 4 L12 dimers bind in a sequential fashion. Binds GTP-bound translation factors.

In terms of biological role, forms part of the ribosomal stalk which helps the ribosome interact with GTP-bound translation factors. Is thus essential for accurate translation. This chain is Large ribosomal subunit protein bL12, found in Lactobacillus acidophilus (strain ATCC 700396 / NCK56 / N2 / NCFM).